Here is a 198-residue protein sequence, read N- to C-terminus: Zinc finger protein 41 homolog (198 aa).

Over residues 1-12 the composition is skewed to basic residues; sequence MEKPAGRKKKTP. Positions 1-55 are disordered; the sequence is MEKPAGRKKKTPTPREEADVQKSALREEKVSGDRKPPERPTVPRKPRTEPCLSPE. Residues 13–38 are compositionally biased toward basic and acidic residues; that stretch reads TPREEADVQKSALREEKVSGDRKPPE. 4 consecutive C2H2-type zinc fingers follow at residues 87-109, 115-137, 143-165, and 171-193; these read YECS…QRVH, FKCA…QRTH, FKCG…QKTH, and YECT…QKRH.

Belongs to the krueppel C2H2-type zinc-finger protein family.

It is found in the nucleus. Functionally, a putative DNA-binding regulatory protein associated with meiosis in spermatogenesis. The chain is Zinc finger protein 41 homolog (ZFP41) from Homo sapiens (Human).